We begin with the raw amino-acid sequence, 107 residues long: U1-lycotoxin-Ls1k (107 aa).

The first 20 residues, 1 to 20 (MMKVLVVVALLVTLISYSSS), serve as a signal peptide directing secretion. Positions 21–41 (EGIDDLEADELLSLMANEQTR) are excised as a propeptide. 4 cysteine pairs are disulfide-bonded: cysteine 44/cysteine 59, cysteine 51/cysteine 68, cysteine 58/cysteine 86, and cysteine 70/cysteine 84.

The protein belongs to the neurotoxin 19 (CSTX) family. 04 (U1-Lctx) subfamily. Expressed by the venom gland.

Its subcellular location is the secreted. This Lycosa singoriensis (Wolf spider) protein is U1-lycotoxin-Ls1k.